The following is a 542-amino-acid chain: Glutamyl-tRNA(Gln) amidotransferase subunit B, mitochondrial (542 aa).

The transit peptide at 1-66 directs the protein to the mitochondrion; it reads MRVFRRFYQV…PNSHTSFFDI (66 aa).

This sequence belongs to the GatB/GatE family. GatB subfamily. As to quaternary structure, subunit of the heterotrimeric GatFAB amidotransferase (AdT) complex, composed of A, B and F subunits.

It is found in the mitochondrion. The catalysed reaction is L-glutamyl-tRNA(Gln) + L-glutamine + ATP + H2O = L-glutaminyl-tRNA(Gln) + L-glutamate + ADP + phosphate + H(+). In terms of biological role, allows the formation of correctly charged Gln-tRNA(Gln) through the transamidation of misacylated Glu-tRNA(Gln) in the mitochondria. The reaction takes place in the presence of glutamine and ATP through an activated gamma-phospho-Glu-tRNA(Gln). The polypeptide is Glutamyl-tRNA(Gln) amidotransferase subunit B, mitochondrial (Zygosaccharomyces rouxii (strain ATCC 2623 / CBS 732 / NBRC 1130 / NCYC 568 / NRRL Y-229)).